A 357-amino-acid polypeptide reads, in one-letter code: Acyl-coenzyme A diphosphatase NUDT19 (357 aa).

The 233-residue stretch at 10–242 folds into the Nudix hydrolase domain; sequence AATVMLAAGW…IWLAPPQFYE (233 aa). Residues 72–94 are disordered; that stretch reads PRFGLGPEPPRQPPFPGLSHGDA. Over residues 78–87 the composition is skewed to pro residues; it reads PEPPRQPPFP. The Nudix box signature appears at 97 to 118; the sequence is AALPDDVALRICAIRETFEEAG. The Mg(2+) site is built by E112 and E116. An N6-succinyllysine modification is found at K300. The short motif at 355–357 is the Microbody targeting signal element; that stretch reads AHL.

Belongs to the Nudix hydrolase family. In terms of assembly, monomer. The cofactor is Mg(2+). Requires Mn(2+) as cofactor.

It is found in the peroxisome. The catalysed reaction is an acyl-CoA + H2O = an acyl-4'-phosphopantetheine + adenosine 3',5'-bisphosphate + 2 H(+). It carries out the reaction CoA + H2O = (R)-4'-phosphopantetheine + adenosine 3',5'-bisphosphate + 2 H(+). The enzyme catalyses hexanoyl-CoA + H2O = hexanoyl-4'-phosphopantetheine + adenosine 3',5'-bisphosphate + 2 H(+). It catalyses the reaction octanoyl-CoA + H2O = S-octanoyl-4'-phosphopantetheine + adenosine 3',5'-bisphosphate + 2 H(+). The catalysed reaction is butanoyl-CoA + H2O = S-butanoyl-4'-phosphopantetheine + adenosine 3',5'-bisphosphate + 2 H(+). It carries out the reaction propanoyl-CoA + H2O = propanoyl-4'-phosphopantetheine + adenosine 3',5'-bisphosphate + 2 H(+). The enzyme catalyses malonyl-CoA + H2O = malonyl-4'-phosphopantetheine + adenosine 3',5'-bisphosphate + 2 H(+). It catalyses the reaction succinyl-CoA + H2O = succinyl-4'-phosphopantetheine + adenosine 3',5'-bisphosphate + 2 H(+). The catalysed reaction is choloyl-CoA + H2O = S-choloyl-4'-phosphopantetheine + adenosine 3',5'-bisphosphate + 2 H(+). It carries out the reaction 4,8-dimethylnonanoyl-CoA + H2O = S-(4,8-dimethylnonanoyl)-4'-phosphopantetheine + adenosine 3',5'-bisphosphate + 2 H(+). The enzyme catalyses (9Z,12Z,15Z)-octadecatrienoyl-CoA + H2O = S-(9Z,12Z,15Z-octadecatrienoyl)-4'-phosphopantetheine + adenosine 3',5'-bisphosphate + 2 H(+). It catalyses the reaction (9Z,12Z)-octadecadienoyl-CoA + H2O = S-(9Z,12Z-octadecadienoyl)-4'-phosphopantetheine + adenosine 3',5'-bisphosphate + 2 H(+). The catalysed reaction is (9Z)-hexadecenoyl-CoA + H2O = S-(9Z-hexadecenoyl)-4'-phosphopantetheine + adenosine 3',5'-bisphosphate + 2 H(+). It carries out the reaction (9Z)-tetradecenoyl-CoA + H2O = S-(9Z-tetradecenoyl)-4'-phosphopantetheine + adenosine 3',5'-bisphosphate + 2 H(+). The enzyme catalyses (6Z)-octenoyl-CoA + H2O = S-(6Z-octenoyl)-4'-phosphopantetheine + adenosine 3',5'-bisphosphate + 2 H(+). It catalyses the reaction hexadecanoyl-CoA + H2O = S-hexadecanoyl-4'-phosphopantetheine + adenosine 3',5'-bisphosphate + 2 H(+). The catalysed reaction is tetradecanoyl-CoA + H2O = tetradecanoyl-4'-phosphopantetheine + adenosine 3',5'-bisphosphate + 2 H(+). It carries out the reaction dodecanoyl-CoA + H2O = S-dodecanoyl-4'-phosphopantetheine + adenosine 3',5'-bisphosphate + 2 H(+). The enzyme catalyses a 5'-end CoA-ribonucleoside in mRNA + H2O = a 5'-end phospho-adenosine-phospho-ribonucleoside in mRNA + (R)-4'-phosphopantetheine + 2 H(+). Fatty acyl-coenzyme A (CoA) diphosphatase that hydrolyzes fatty acyl-CoA to yield acyl-4'-phosphopantetheine and adenosine 3',5'-bisphosphate. Mediates the hydrolysis of a wide range of CoA esters, including choloyl-CoA and branched-chain fatty-acyl-CoA esters and at low substrate concentrations medium and long-chain fatty-acyl-CoA esters are the primary substrates. Highest activity seen with medium-chain acyl-CoA esters and higher rates of activity seen with the unsaturated acyl-CoA esters compared with the saturated esters. Exhibits decapping activity towards dpCoA-capped RNAs in vitro. The polypeptide is Acyl-coenzyme A diphosphatase NUDT19 (Nudt19) (Mus caroli (Ryukyu mouse)).